The chain runs to 57 residues: Large ribosomal subunit protein bL32 (57 aa).

This sequence belongs to the bacterial ribosomal protein bL32 family.

This is Large ribosomal subunit protein bL32 from Staphylococcus saprophyticus subsp. saprophyticus (strain ATCC 15305 / DSM 20229 / NCIMB 8711 / NCTC 7292 / S-41).